The primary structure comprises 514 residues: Na(+)/H(+) antiporter NhaB (514 aa).

12 consecutive transmembrane segments (helical) span residues 23 to 43, 63 to 83, 97 to 117, 120 to 140, 144 to 164, 202 to 222, 238 to 258, 303 to 323, 357 to 377, 391 to 411, 447 to 467, and 475 to 495; these read LALL…PFIA, PLLP…TSAA, LLLM…LFIF, LLLS…AAAF, FLDA…FYGI, LMMH…VGEP, FFLR…LTCM, AIIG…VGLI, LTVF…APII, LFYL…VGTI, ATPN…APLI, and VWMA…CVEF.

Belongs to the NhaB Na(+)/H(+) (TC 2.A.34) antiporter family.

Its subcellular location is the cell inner membrane. The enzyme catalyses 2 Na(+)(in) + 3 H(+)(out) = 2 Na(+)(out) + 3 H(+)(in). Its function is as follows. Na(+)/H(+) antiporter that extrudes sodium in exchange for external protons. The sequence is that of Na(+)/H(+) antiporter NhaB from Salmonella paratyphi B (strain ATCC BAA-1250 / SPB7).